Consider the following 757-residue polypeptide: Nitrogen fixation protein FixI (757 aa).

Residues 1 to 121 (MSCCASSAAI…GEEEGDDLLK (121 aa)) lie on the Cytoplasmic side of the membrane. Positions 37-107 (RQTELSVPNA…AIAERGYQTH (71 aa)) constitute an HMA domain. A metal cation-binding residues include Cys48 and Cys51. A helical membrane pass occupies residues 122–143 (QLILAVAVSGFAATNIMLLSVS). At 144–158 (VWSGADAATRDLFHW) the chain is on the extracellular side. A helical membrane pass occupies residues 159 to 178 (ISALIAGPALIYAGRFFYKS). Residues 179 to 185 (AWNAIRH) are Cytoplasmic-facing. Residues 186–206 (GRTNMDVPIALAVSLSYGMSL) form a helical membrane-spanning segment. The Extracellular segment spans residues 207-218 (HETIGHGEHAWF). The helical transmembrane segment at 219–239 (DASVTLLFFLLIGRTLDHMMR) threads the bilayer. At 240–368 (GRARTAISGL…RARYRRIADR (129 aa)) the chain is on the cytoplasmic side. Residues 369–391 (AARYYSPAVHLLALLTFVGWMLV) form a helical membrane-spanning segment. The Extracellular portion of the chain corresponds to 392–398 (EGDVRHA). Residues 399–416 (MLVAVAVLIITCPCALGL) form a helical membrane-spanning segment. The Cytoplasmic portion of the chain corresponds to 417-688 (AVPVVQVVAA…ETSRHAGQLI (272 aa)). Asp454 serves as the catalytic 4-aspartylphosphate intermediate. Residues Asp634 and Asp638 each coordinate Mg(2+). The chain crosses the membrane as a helical span at residues 689 to 708 (RQNFALAIGYNVIAVPIAIL). At 709-713 (GYATP) the chain is on the extracellular side. Residues 714-732 (LVAAVAMSSSSLVVVFNAL) traverse the membrane as a helical segment. Residues 733–757 (RLKRSLAAGRGATPGTLIHSGAVTS) are Cytoplasmic-facing.

The protein belongs to the cation transport ATPase (P-type) (TC 3.A.3) family. Type IB subfamily.

The protein resides in the cell membrane. It carries out the reaction ATP + H2O = ADP + phosphate + H(+). FixI is a pump of a specific cation involved in symbiotic nitrogen fixation. The four proteins FixG, FixH, FixI, and FixS may participate in a membrane-bound complex coupling the FixI cation pump with a redox process catalyzed by FixG. The protein is Nitrogen fixation protein FixI (fixI) of Rhizobium meliloti (strain 1021) (Ensifer meliloti).